We begin with the raw amino-acid sequence, 300 residues long: N-acetylmuramic acid 6-phosphate etherase (300 aa).

The SIS domain maps to 57–220; that stretch reads ITHAFAHGGR…TSGAMIRSGK (164 aa). The active-site Proton donor is the glutamate 85. The active site involves glutamate 116.

It belongs to the GCKR-like family. MurNAc-6-P etherase subfamily. As to quaternary structure, homodimer.

It catalyses the reaction N-acetyl-D-muramate 6-phosphate + H2O = N-acetyl-D-glucosamine 6-phosphate + (R)-lactate. It participates in amino-sugar metabolism; 1,6-anhydro-N-acetylmuramate degradation. It functions in the pathway amino-sugar metabolism; N-acetylmuramate degradation. Its pathway is cell wall biogenesis; peptidoglycan recycling. Its function is as follows. Specifically catalyzes the cleavage of the D-lactyl ether substituent of MurNAc 6-phosphate, producing GlcNAc 6-phosphate and D-lactate. Together with AnmK, is also required for the utilization of anhydro-N-acetylmuramic acid (anhMurNAc) either imported from the medium or derived from its own cell wall murein, and thus plays a role in cell wall recycling. The polypeptide is N-acetylmuramic acid 6-phosphate etherase (Vibrio vulnificus (strain CMCP6)).